The sequence spans 220 residues: Deoxyribose-phosphate aldolase (220 aa).

The Proton donor/acceptor role is filled by aspartate 89. Lysine 151 functions as the Schiff-base intermediate with acetaldehyde in the catalytic mechanism. The active-site Proton donor/acceptor is the lysine 180.

Belongs to the DeoC/FbaB aldolase family. DeoC type 1 subfamily.

The protein localises to the cytoplasm. The enzyme catalyses 2-deoxy-D-ribose 5-phosphate = D-glyceraldehyde 3-phosphate + acetaldehyde. Its pathway is carbohydrate degradation; 2-deoxy-D-ribose 1-phosphate degradation; D-glyceraldehyde 3-phosphate and acetaldehyde from 2-deoxy-alpha-D-ribose 1-phosphate: step 2/2. Its function is as follows. Catalyzes a reversible aldol reaction between acetaldehyde and D-glyceraldehyde 3-phosphate to generate 2-deoxy-D-ribose 5-phosphate. In Streptococcus suis (strain 98HAH33), this protein is Deoxyribose-phosphate aldolase.